Reading from the N-terminus, the 153-residue chain is Large-conductance mechanosensitive channel (153 aa).

Transmembrane regions (helical) follow at residues 16–36 (VIDLAVGVVIGGAFGSIVKSL) and 88–108 (GLFINALVSFTIVAFAIFMLV).

Belongs to the MscL family. In terms of assembly, homopentamer.

The protein localises to the cell inner membrane. Its function is as follows. Channel that opens in response to stretch forces in the membrane lipid bilayer. May participate in the regulation of osmotic pressure changes within the cell. In Chromobacterium violaceum (strain ATCC 12472 / DSM 30191 / JCM 1249 / CCUG 213 / NBRC 12614 / NCIMB 9131 / NCTC 9757 / MK), this protein is Large-conductance mechanosensitive channel.